Consider the following 307-residue polypeptide: Elongation factor Ts, mitochondrial (307 aa).

The transit peptide at 1 to 19 directs the protein to the mitochondrion; that stretch reads MIFTRLTRFVGHGTGLRLY.

Belongs to the EF-Ts family.

It localises to the mitochondrion. Functionally, associates with the EF-Tu.GDP complex and induces the exchange of GDP to GTP. It remains bound to the aminoacyl-tRNA.EF-Tu.GTP complex up to the GTP hydrolysis stage on the ribosome. The sequence is that of Elongation factor Ts, mitochondrial from Aedes aegypti (Yellowfever mosquito).